A 393-amino-acid polypeptide reads, in one-letter code: S-adenosylmethionine synthase 2 (393 aa).

A Mg(2+)-binding site is contributed by Glu-9. Residue His-15 coordinates ATP. Glu-43 provides a ligand contact to K(+). The L-methionine site is built by Glu-56 and Gln-99. Residues 167-169, 235-238, Asp-246, 252-253, Ala-269, Lys-273, and Lys-277 each bind ATP; these read DGK, SGRF, and RM. Residue Asp-246 participates in L-methionine binding. Lys-277 provides a ligand contact to L-methionine.

This sequence belongs to the AdoMet synthase family. In terms of assembly, homotetramer. The cofactor is Mn(2+). Mg(2+) serves as cofactor. Requires Co(2+) as cofactor. It depends on K(+) as a cofactor.

Its subcellular location is the cytoplasm. It catalyses the reaction L-methionine + ATP + H2O = S-adenosyl-L-methionine + phosphate + diphosphate. The protein operates within amino-acid biosynthesis; S-adenosyl-L-methionine biosynthesis; S-adenosyl-L-methionine from L-methionine: step 1/1. Catalyzes the formation of S-adenosylmethionine from methionine and ATP. The reaction comprises two steps that are both catalyzed by the same enzyme: formation of S-adenosylmethionine (AdoMet) and triphosphate, and subsequent hydrolysis of the triphosphate. In Daucus carota (Wild carrot), this protein is S-adenosylmethionine synthase 2 (SAMS2).